Consider the following 277-residue polypeptide: 4-hydroxy-3-methylbut-2-enyl diphosphate reductase (277 aa).

Position 12 (C12) interacts with [4Fe-4S] cluster. (2E)-4-hydroxy-3-methylbut-2-enyl diphosphate is bound by residues H36 and H70. Residues H36 and H70 each contribute to the dimethylallyl diphosphate site. The isopentenyl diphosphate site is built by H36 and H70. A [4Fe-4S] cluster-binding site is contributed by C92. H120 contacts (2E)-4-hydroxy-3-methylbut-2-enyl diphosphate. Position 120 (H120) interacts with dimethylallyl diphosphate. An isopentenyl diphosphate-binding site is contributed by H120. Catalysis depends on E122, which acts as the Proton donor. T158 contacts (2E)-4-hydroxy-3-methylbut-2-enyl diphosphate. C186 contacts [4Fe-4S] cluster. Residues S214, N216, and S258 each coordinate (2E)-4-hydroxy-3-methylbut-2-enyl diphosphate. Residues S214, N216, and S258 each coordinate dimethylallyl diphosphate. Residues S214, N216, and S258 each contribute to the isopentenyl diphosphate site.

The protein belongs to the IspH family. It depends on [4Fe-4S] cluster as a cofactor.

It carries out the reaction isopentenyl diphosphate + 2 oxidized [2Fe-2S]-[ferredoxin] + H2O = (2E)-4-hydroxy-3-methylbut-2-enyl diphosphate + 2 reduced [2Fe-2S]-[ferredoxin] + 2 H(+). The enzyme catalyses dimethylallyl diphosphate + 2 oxidized [2Fe-2S]-[ferredoxin] + H2O = (2E)-4-hydroxy-3-methylbut-2-enyl diphosphate + 2 reduced [2Fe-2S]-[ferredoxin] + 2 H(+). It participates in isoprenoid biosynthesis; dimethylallyl diphosphate biosynthesis; dimethylallyl diphosphate from (2E)-4-hydroxy-3-methylbutenyl diphosphate: step 1/1. The protein operates within isoprenoid biosynthesis; isopentenyl diphosphate biosynthesis via DXP pathway; isopentenyl diphosphate from 1-deoxy-D-xylulose 5-phosphate: step 6/6. In terms of biological role, catalyzes the conversion of 1-hydroxy-2-methyl-2-(E)-butenyl 4-diphosphate (HMBPP) into a mixture of isopentenyl diphosphate (IPP) and dimethylallyl diphosphate (DMAPP). Acts in the terminal step of the DOXP/MEP pathway for isoprenoid precursor biosynthesis. This Campylobacter jejuni subsp. doylei (strain ATCC BAA-1458 / RM4099 / 269.97) protein is 4-hydroxy-3-methylbut-2-enyl diphosphate reductase.